The chain runs to 943 residues: Isoleucine--tRNA ligase (943 aa).

The 'HIGH' region motif lies at 58–68; that stretch reads PYANGKIHIGH. Glu567 provides a ligand contact to L-isoleucyl-5'-AMP. Residues 608 to 612 carry the 'KMSKS' region motif; sequence KMSKS. Lys611 contacts ATP. Residues Cys906, Cys909, Cys926, and Cys929 each contribute to the Zn(2+) site.

The protein belongs to the class-I aminoacyl-tRNA synthetase family. IleS type 1 subfamily. Monomer. Zn(2+) is required as a cofactor.

It localises to the cytoplasm. The enzyme catalyses tRNA(Ile) + L-isoleucine + ATP = L-isoleucyl-tRNA(Ile) + AMP + diphosphate. In terms of biological role, catalyzes the attachment of isoleucine to tRNA(Ile). As IleRS can inadvertently accommodate and process structurally similar amino acids such as valine, to avoid such errors it has two additional distinct tRNA(Ile)-dependent editing activities. One activity is designated as 'pretransfer' editing and involves the hydrolysis of activated Val-AMP. The other activity is designated 'posttransfer' editing and involves deacylation of mischarged Val-tRNA(Ile). This chain is Isoleucine--tRNA ligase, found in Pseudomonas putida (strain ATCC 47054 / DSM 6125 / CFBP 8728 / NCIMB 11950 / KT2440).